The primary structure comprises 126 residues: Small ribosomal subunit protein uS13 (126 aa).

A disordered region spans residues Leu96 to Lys126. Residues Ala107–Lys126 show a composition bias toward basic residues.

Belongs to the universal ribosomal protein uS13 family. In terms of assembly, part of the 30S ribosomal subunit. Forms a loose heterodimer with protein S19. Forms two bridges to the 50S subunit in the 70S ribosome.

Located at the top of the head of the 30S subunit, it contacts several helices of the 16S rRNA. In the 70S ribosome it contacts the 23S rRNA (bridge B1a) and protein L5 of the 50S subunit (bridge B1b), connecting the 2 subunits; these bridges are implicated in subunit movement. Contacts the tRNAs in the A and P-sites. In Hydrogenobaculum sp. (strain Y04AAS1), this protein is Small ribosomal subunit protein uS13.